The primary structure comprises 164 residues: Small ribosomal subunit protein uS5 (164 aa).

Residues 11-74 (LKEKLISVNR…EKARKNMIII (64 aa)) form the S5 DRBM domain.

It belongs to the universal ribosomal protein uS5 family. Part of the 30S ribosomal subunit. Contacts proteins S4 and S8.

In terms of biological role, with S4 and S12 plays an important role in translational accuracy. Its function is as follows. Located at the back of the 30S subunit body where it stabilizes the conformation of the head with respect to the body. This chain is Small ribosomal subunit protein uS5, found in Buchnera aphidicola subsp. Cinara cedri (strain Cc).